The primary structure comprises 39 residues: Glutenin, high molecular weight subunit PC237 (39 aa).

It belongs to the gliadin/glutenin family. In terms of assembly, disulfide-bridge linked aggregates.

Functionally, glutenins are high-molecular weight seed storage proteins of wheat endosperm. Thought to be responsible for the visco-elastic property of wheat dough. This is Glutenin, high molecular weight subunit PC237 from Triticum aestivum (Wheat).